We begin with the raw amino-acid sequence, 87 residues long: Small ribosomal subunit protein bS20 (87 aa).

This sequence belongs to the bacterial ribosomal protein bS20 family.

Functionally, binds directly to 16S ribosomal RNA. The sequence is that of Small ribosomal subunit protein bS20 from Clostridium perfringens (strain ATCC 13124 / DSM 756 / JCM 1290 / NCIMB 6125 / NCTC 8237 / Type A).